We begin with the raw amino-acid sequence, 599 residues long: Elongation factor 4 (599 aa).

Positions 5–187 constitute a tr-type G domain; sequence NRIRNFSIVA…AIVTRLPAPK (183 aa). GTP-binding positions include 17–22 and 134–137; these read DHGKST and NKVD.

The protein belongs to the TRAFAC class translation factor GTPase superfamily. Classic translation factor GTPase family. LepA subfamily.

The protein localises to the cell inner membrane. It carries out the reaction GTP + H2O = GDP + phosphate + H(+). Required for accurate and efficient protein synthesis under certain stress conditions. May act as a fidelity factor of the translation reaction, by catalyzing a one-codon backward translocation of tRNAs on improperly translocated ribosomes. Back-translocation proceeds from a post-translocation (POST) complex to a pre-translocation (PRE) complex, thus giving elongation factor G a second chance to translocate the tRNAs correctly. Binds to ribosomes in a GTP-dependent manner. This is Elongation factor 4 from Jannaschia sp. (strain CCS1).